Here is a 296-residue protein sequence, read N- to C-terminus: tRNA dimethylallyltransferase (296 aa).

2 to 9 contributes to the ATP binding site; the sequence is GPTASGKT. 4–9 is a substrate binding site; that stretch reads TASGKT. 3 interaction with substrate tRNA regions span residues 27 to 30, 151 to 155, and 232 to 237; these read DSAL, QRLSR, and RCVGYR.

Belongs to the IPP transferase family. As to quaternary structure, monomer. Requires Mg(2+) as cofactor.

It carries out the reaction adenosine(37) in tRNA + dimethylallyl diphosphate = N(6)-dimethylallyladenosine(37) in tRNA + diphosphate. Functionally, catalyzes the transfer of a dimethylallyl group onto the adenine at position 37 in tRNAs that read codons beginning with uridine, leading to the formation of N6-(dimethylallyl)adenosine (i(6)A). This Shewanella baltica (strain OS155 / ATCC BAA-1091) protein is tRNA dimethylallyltransferase.